The following is a 98-amino-acid chain: Mobilization protein MobS (98 aa).

Functionally, this protein is essential to promote the specific transfer of the plasmid in the presence of conjugative plasmids. This chain is Mobilization protein MobS (mobS), found in Acidithiobacillus ferridurans.